The following is a 76-amino-acid chain: uncharacterized protein (76 aa).

The N-terminal stretch at 1–22 (MFTKALSVVLLTCALFSGQLMA) is a signal peptide.

This is an uncharacterized protein from Escherichia coli O157:H7.